Here is a 251-residue protein sequence, read N- to C-terminus: Aliphatic sulfonates import ATP-binding protein SsuB (251 aa).

Positions 3-231 (VSIDGVSKYF…PRSKTSESFQ (229 aa)) constitute an ABC transporter domain. Residue 39–46 (GPSGCGKS) coordinates ATP.

Belongs to the ABC transporter superfamily. Aliphatic sulfonates importer (TC 3.A.1.17.2) family. The complex is composed of two ATP-binding proteins (SsuB), two transmembrane proteins (SsuC) and a solute-binding protein (SsuA).

The protein resides in the cell membrane. The catalysed reaction is ATP + H2O + aliphatic sulfonate-[sulfonate-binding protein]Side 1 = ADP + phosphate + aliphatic sulfonateSide 2 + [sulfonate-binding protein]Side 1.. In terms of biological role, part of the ABC transporter complex SsuABC involved in aliphatic sulfonates import. Responsible for energy coupling to the transport system. The sequence is that of Aliphatic sulfonates import ATP-binding protein SsuB from Bacillus cereus (strain ATCC 10987 / NRS 248).